Here is a 155-residue protein sequence, read N- to C-terminus: SsrA-binding protein (155 aa).

Belongs to the SmpB family.

It localises to the cytoplasm. Its function is as follows. Required for rescue of stalled ribosomes mediated by trans-translation. Binds to transfer-messenger RNA (tmRNA), required for stable association of tmRNA with ribosomes. tmRNA and SmpB together mimic tRNA shape, replacing the anticodon stem-loop with SmpB. tmRNA is encoded by the ssrA gene; the 2 termini fold to resemble tRNA(Ala) and it encodes a 'tag peptide', a short internal open reading frame. During trans-translation Ala-aminoacylated tmRNA acts like a tRNA, entering the A-site of stalled ribosomes, displacing the stalled mRNA. The ribosome then switches to translate the ORF on the tmRNA; the nascent peptide is terminated with the 'tag peptide' encoded by the tmRNA and targeted for degradation. The ribosome is freed to recommence translation, which seems to be the essential function of trans-translation. This Geobacillus thermodenitrificans (strain NG80-2) protein is SsrA-binding protein.